Consider the following 8545-residue polypeptide: Nuclear anchorage protein 1 (8545 aa).

The segment at 1–325 (MSSSPPARPC…VITYVSQFVR (325 aa)) is actin-binding. At 1–8494 (MSSSPPARPC…QRSRWRRVLR (8494 aa)) the chain is on the cytoplasmic side. A Calponin-homology (CH) 1 domain is found at 23–130 (KAQKNTFTRW…LIWQIILHFQ (108 aa)). Residues 148–197 (TEEPTSSAQPEVVVTAPSPTPSSKKSHSKVSSLSGSKTSLASGEKAPSSP) are disordered. A compositionally biased stretch (low complexity) spans 159 to 190 (VVVTAPSPTPSSKKSHSKVSSLSGSKTSLASG). One can recognise a Calponin-homology (CH) 2 domain in the interval 222 to 328 (QSVEQVFLRW…YVSQFVRMFG (107 aa)). 19 coiled-coil regions span residues 754 to 774 (NIRD…NHSR), 1072 to 1101 (SFFQ…LMVH), 1215 to 1236 (ADIL…EIQA), 1324 to 1384 (DTKK…QFED), 1574 to 1629 (RSIE…DLVK), 1725 to 1754 (ENRN…YEDA), 1950 to 1981 (PAII…NYNQ), 2103 to 2580 (DNIE…KKSD), 2682 to 2712 (SVKE…KIAK), 2852 to 2949 (IMQE…NIGK), 3002 to 3119 (DQIV…KTVV), 3178 to 3295 (DDEK…DEFK), 3346 to 3417 (QLQH…PEND), 3482 to 3552 (DELI…EKSL), 3587 to 3703 (KAEE…ELLD), 3781 to 3839 (ALKA…KEQL), 3902 to 4022 (AAHD…KTVV), 4114 to 4198 (LDVA…DEFK), and 4249 to 4320 (QLQH…PEND). Residues 3010–3019 (EAEDVTAKES) are compositionally biased toward basic and acidic residues. The disordered stretch occupies residues 3010–3033 (EAEDVTAKESAKKKKKDKKKSPQE). 6 consecutive repeat copies span residues 3241 to 4143 (QVAK…KIDP), 4144 to 5097 (QVAK…KIDP), 5098 to 6000 (QVAK…KIDP), 6001 to 6903 (QVAK…KIDP), 6904 to 7806 (QVAK…KIDP), and 7807 to 8199 (QVAK…EERA). The 6 X tandem repeat stretch occupies residues 3241–8199 (QVAKDIKDSK…TLIPDLEERA (4959 aa)). Residues 3913–3922 (EAEDVTAKES) are compositionally biased toward basic and acidic residues. The segment at 3913–3936 (EAEDVTAKESAKKKKKDKKKSPQE) is disordered. A compositionally biased stretch (basic and acidic residues) spans 4372–4393 (ITREDGGDDNKSPDELIDDRGR). Residues 4372 to 4395 (ITREDGGDDNKSPDELIDDRGRST) are disordered. Coiled coils occupy residues 4436–4506 (DELI…EKSL), 4541–4657 (KAEE…ELLD), 4735–4793 (ALKA…KEQL), 4856–4976 (AAHD…KTVV), 5035–5152 (DDEK…DEFK), 5203–5274 (QLQH…PEND), 5339–5409 (DELI…EKSL), 5444–5560 (KAEE…ELLD), 5638–5696 (ALKA…KEQL), 5759–5879 (AAHD…KTVV), 5938–6055 (DDEK…DEFK), 6106–6177 (QLQH…PEND), 6242–6312 (DELI…EKSL), 6347–6463 (KAEE…ELLD), 6541–6599 (ALKA…KEQL), 6662–6782 (AAHD…KTVV), 6841–6958 (DDEK…DEFK), 7009–7080 (QLQH…PEND), 7145–7215 (DELI…EKSL), 7250–7366 (KAEE…ELLD), 7444–7502 (ALKA…KEQL), 7565–7685 (AAHD…KTVV), 7744–7861 (DDEK…DEFK), 7912–7983 (QLQH…PEND), 8048–8118 (DELI…EKSL), 8153–8204 (KAEE…IWER), 8273–8329 (VAED…DINN), and 8370–8390 (STSI…KEIE). Positions 4867-4876 (EAEDVTAKES) are enriched in basic and acidic residues. Residues 4867-4890 (EAEDVTAKESAKKKKKDKKKSPQE) are disordered. Residues 5770–5779 (EAEDVTAKES) show a composition bias toward basic and acidic residues. The tract at residues 5770-5793 (EAEDVTAKESAKKKKKDKKKSPQE) is disordered. The segment covering 6673–6682 (EAEDVTAKES) has biased composition (basic and acidic residues). The disordered stretch occupies residues 6673–6696 (EAEDVTAKESAKKKKKDKKKSPQE). Residues 7576–7585 (EAEDVTAKES) are compositionally biased toward basic and acidic residues. Positions 7576–7599 (EAEDVTAKESAKKKKKDKKKSPQE) are disordered. 2 disordered regions span residues 8391-8418 (PRLQ…KPYD) and 8449-8480 (SDSE…LSEE). Acidic residues predominate over residues 8401-8411 (DNEDDEDEEKG). A compositionally biased stretch (basic and acidic residues) spans 8451 to 8464 (SESRSEFDSLDSRS). A KASH domain is found at 8486–8545 (RSRWRRVLRTALPLQALLVLLMGAACLVPHCDDEYCCQLLNNFAKSFDPSLEFVNGPPPF). The chain crosses the membrane as a helical; Anchor for type IV membrane protein span at residues 8495-8513 (TALPLQALLVLLMGAACLV). The Perinuclear space segment spans residues 8514 to 8545 (PHCDDEYCCQLLNNFAKSFDPSLEFVNGPPPF).

It belongs to the nesprin family. As to quaternary structure, interacts with F-actin via its N-terminal domain. Most likely interacts with unc-84; the interaction is probably required to recruit anc-1 to the nuclear envelope. As to expression, ubiquitously expressed in all postembryonic cells.

The protein localises to the nucleus outer membrane. Its subcellular location is the cytoplasm. It is found in the cytoskeleton. Functionally, plays a central role in nuclear and mitochondrial anchoring. Probably connects nuclei to the cytoskeleton by interacting with unc-84 at the nuclear envelope and with F-actin in the cytoplasm, creating a bridge across the nuclear envelope between the cytoskeleton and the nucleus. Has a role in positioning of the cell body of the PVQ lumbar interneuron. In Caenorhabditis elegans, this protein is Nuclear anchorage protein 1.